Consider the following 432-residue polypeptide: Probable imidazolonepropionase (432 aa).

4-imidazolone-5-propanoate contacts are provided by tyrosine 159 and histidine 192. Tyrosine 159 lines the N-formimidoyl-L-glutamate pocket. Histidine 260 lines the Fe(3+) pocket. Histidine 260 is a binding site for Zn(2+). Glutamate 263 lines the 4-imidazolone-5-propanoate pocket. Aspartate 334 is a binding site for Fe(3+). Aspartate 334 provides a ligand contact to Zn(2+). Residue asparagine 336 participates in N-formimidoyl-L-glutamate binding.

Belongs to the metallo-dependent hydrolases superfamily. HutI family. Zn(2+) is required as a cofactor. Fe(3+) serves as cofactor.

The catalysed reaction is 4-imidazolone-5-propanoate + H2O = N-formimidoyl-L-glutamate. Its pathway is amino-acid degradation; L-histidine degradation into L-glutamate; N-formimidoyl-L-glutamate from L-histidine: step 3/3. The chain is Probable imidazolonepropionase (amdhd1) from Xenopus tropicalis (Western clawed frog).